We begin with the raw amino-acid sequence, 312 residues long: Very-long-chain 3-oxoacyl-CoA reductase (312 aa).

A helical transmembrane segment spans residues 4–24 (ALPAAGFLYWVGASTVAYLAL). 50–79 (GEWAVVTGGTDGIGKSYAEELAKRGMKIVL) contributes to the NADP(+) binding site. Helical transmembrane passes span 182-202 (GAILNISSASGMYPVPLLTIY) and 271-291 (GYPIHSLVASVSASLPSWLYF). Ser189 is a substrate binding site. Tyr202 (proton acceptor) is an active-site residue. A Di-lysine motif motif is present at residues 308-312 (KMKMN).

Belongs to the short-chain dehydrogenases/reductases (SDR) family. 17-beta-HSD 3 subfamily.

It is found in the endoplasmic reticulum membrane. It carries out the reaction a very-long-chain (3R)-3-hydroxyacyl-CoA + NADP(+) = a very-long-chain 3-oxoacyl-CoA + NADPH + H(+). The enzyme catalyses 17beta-estradiol + NAD(+) = estrone + NADH + H(+). It catalyses the reaction 17beta-estradiol + NADP(+) = estrone + NADPH + H(+). The catalysed reaction is 3-oxooctadecanoyl-CoA + NADPH + H(+) = (3R)-hydroxyoctadecanoyl-CoA + NADP(+). It carries out the reaction (7Z,10Z,13Z,16Z)-3-oxodocosatetraenoyl-CoA + NADPH + H(+) = (3R)-hydroxy-(7Z,10Z,13Z,16Z)-docosatetraenoyl-CoA + NADP(+). The enzyme catalyses 3-oxo-(7Z,10Z,13Z,16Z,19Z)-docosapentaenoyl-CoA + NADPH + H(+) = (3R)-hydroxy-(7Z,10Z,13Z,16Z,19Z)-docosapentaenoyl-CoA + NADP(+). It catalyses the reaction (8Z,11Z,14Z)-3-oxoeicosatrienoyl-CoA + NADPH + H(+) = (3R)-hydroxy-(8Z,11Z,14Z)-eicosatrienoyl-CoA + NADP(+). It functions in the pathway lipid metabolism; fatty acid biosynthesis. Its pathway is steroid biosynthesis; estrogen biosynthesis. Functionally, catalyzes the second of the four reactions of the long-chain fatty acids elongation cycle. This endoplasmic reticulum-bound enzymatic process, allows the addition of two carbons to the chain of long- and very long-chain fatty acids/VLCFAs per cycle. This enzyme has a 3-ketoacyl-CoA reductase activity, reducing 3-ketoacyl-CoA to 3-hydroxyacyl-CoA, within each cycle of fatty acid elongation. Thereby, it may participate in the production of VLCFAs of different chain lengths that are involved in multiple biological processes as precursors of membrane lipids and lipid mediators. May also catalyze the transformation of estrone (E1) into estradiol (E2) and play a role in estrogen formation. In Bos taurus (Bovine), this protein is Very-long-chain 3-oxoacyl-CoA reductase (HSD17B12).